A 402-amino-acid chain; its full sequence is Protein DesVIII (402 aa).

The protein belongs to the cytochrome P450 family. In terms of assembly, forms a complex with DesVII.

It functions in the pathway antibiotic biosynthesis. Involved in the biosynthesis of the macrolide antibiotics methymycin, neomethymycin, narbomycin, and pikromycin. DesVIII assists the folding of the DesVII polypeptide. However, unlike chaperones, it remains bound to DesVII during catalysis, forming a tight DesVII/DesVIII complex. Although the formation of the DesVII/DesVIII complex is essential for the catalytic activity, DesVIII is unlikely to be involved in catalysis directly. This chain is Protein DesVIII, found in Streptomyces venezuelae.